The chain runs to 334 residues: Type II methyltransferase M.NlaIII (334 aa).

Belongs to the N(4)/N(6)-methyltransferase family.

The catalysed reaction is a 2'-deoxyadenosine in DNA + S-adenosyl-L-methionine = an N(6)-methyl-2'-deoxyadenosine in DNA + S-adenosyl-L-homocysteine + H(+). In terms of biological role, a methylase, recognizes the double-stranded sequence 5'-CATG-3', methylates A-2 on both strands and protects the DNA from cleavage by the NlaIII endonuclease. This Neisseria lactamica protein is Type II methyltransferase M.NlaIII (nlaIIIM).